We begin with the raw amino-acid sequence, 96 residues long: Co-chaperonin GroES (96 aa).

The protein belongs to the GroES chaperonin family. Heptamer of 7 subunits arranged in a ring. Interacts with the chaperonin GroEL.

The protein localises to the cytoplasm. Its function is as follows. Together with the chaperonin GroEL, plays an essential role in assisting protein folding. The GroEL-GroES system forms a nano-cage that allows encapsulation of the non-native substrate proteins and provides a physical environment optimized to promote and accelerate protein folding. GroES binds to the apical surface of the GroEL ring, thereby capping the opening of the GroEL channel. In Shewanella sediminis (strain HAW-EB3), this protein is Co-chaperonin GroES.